A 228-amino-acid polypeptide reads, in one-letter code: Urease accessory protein UreF (228 aa).

It belongs to the UreF family. As to quaternary structure, ureD, UreF and UreG form a complex that acts as a GTP-hydrolysis-dependent molecular chaperone, activating the urease apoprotein by helping to assemble the nickel containing metallocenter of UreC. The UreE protein probably delivers the nickel.

The protein localises to the cytoplasm. Required for maturation of urease via the functional incorporation of the urease nickel metallocenter. The chain is Urease accessory protein UreF from Blochmanniella pennsylvanica (strain BPEN).